We begin with the raw amino-acid sequence, 380 residues long: 3-dehydroquinate synthase (380 aa).

Residues 118–122, 142–143, lysine 155, and lysine 164 each bind NAD(+); these read GVIGD and TS. Zn(2+) is bound by residues glutamate 197, histidine 259, and histidine 278.

The protein belongs to the sugar phosphate cyclases superfamily. Dehydroquinate synthase family. The cofactor is Co(2+). Zn(2+) serves as cofactor. Requires NAD(+) as cofactor.

Its subcellular location is the cytoplasm. The catalysed reaction is 7-phospho-2-dehydro-3-deoxy-D-arabino-heptonate = 3-dehydroquinate + phosphate. It functions in the pathway metabolic intermediate biosynthesis; chorismate biosynthesis; chorismate from D-erythrose 4-phosphate and phosphoenolpyruvate: step 2/7. Functionally, catalyzes the conversion of 3-deoxy-D-arabino-heptulosonate 7-phosphate (DAHP) to dehydroquinate (DHQ). This Sinorhizobium medicae (strain WSM419) (Ensifer medicae) protein is 3-dehydroquinate synthase.